The sequence spans 155 residues: 6,7-dimethyl-8-ribityllumazine synthase (155 aa).

5-amino-6-(D-ribitylamino)uracil-binding positions include phenylalanine 24, 58–60 (AFE), and 82–84 (AII). 87 to 88 (ST) contributes to the (2S)-2-hydroxy-3-oxobutyl phosphate binding site. Histidine 90 acts as the Proton donor in catalysis. Phenylalanine 115 provides a ligand contact to 5-amino-6-(D-ribitylamino)uracil. Arginine 129 is a binding site for (2S)-2-hydroxy-3-oxobutyl phosphate.

This sequence belongs to the DMRL synthase family.

The enzyme catalyses (2S)-2-hydroxy-3-oxobutyl phosphate + 5-amino-6-(D-ribitylamino)uracil = 6,7-dimethyl-8-(1-D-ribityl)lumazine + phosphate + 2 H2O + H(+). Its pathway is cofactor biosynthesis; riboflavin biosynthesis; riboflavin from 2-hydroxy-3-oxobutyl phosphate and 5-amino-6-(D-ribitylamino)uracil: step 1/2. Catalyzes the formation of 6,7-dimethyl-8-ribityllumazine by condensation of 5-amino-6-(D-ribitylamino)uracil with 3,4-dihydroxy-2-butanone 4-phosphate. This is the penultimate step in the biosynthesis of riboflavin. The chain is 6,7-dimethyl-8-ribityllumazine synthase from Chlorobium phaeovibrioides (strain DSM 265 / 1930) (Prosthecochloris vibrioformis (strain DSM 265)).